The chain runs to 1493 residues: Protein Shroom4 (1493 aa).

A PDZ domain is found at Tyr10 to Asn92. Positions Cys202–Ser282 are disordered. Polar residues-rich tracts occupy residues Ala234–Thr243 and Thr249–Tyr262. A Phosphoserine modification is found at Ser411. A disordered region spans residues Gly430–Ser695. Composition is skewed to basic and acidic residues over residues Gln470–Ser484 and Gly498–Phe509. Polar residues predominate over residues Asn513 to Ala547. Ser729 is subject to Phosphoserine. 2 disordered regions span residues Ala740 to Ala759 and Ser781 to Pro813. The span at Lys782–Gln802 shows a compositional bias: polar residues. At Ser1019 the chain carries Phosphoserine. 4 disordered regions span residues Ala1117 to Gly1170, Ser1187 to Glu1206, Asp1214 to Tyr1236, and Gly1246 to Gly1265. Over residues Ala1118–Lys1129 the composition is skewed to low complexity. Over residues Glu1132–Leu1159 the composition is skewed to acidic residues. In terms of domain architecture, ASD2 spans Ser1213–Asn1492. The stretch at Leu1382–Leu1488 forms a coiled coil.

It belongs to the shroom family. As to quaternary structure, interacts directly with F-actin. As to expression, expressed in all fetal and adult tissues investigated. Expressed in adult heart, brain, placenta, lung, liver, skeletal muscle, kidney and pancreas. In brain regions detected in cerebellum, cerebral cortex, medulla, spinal cord, occipital pole, frontal lobe, temporal lobe and putamen. The expression is strongest in the medulla and weakest in the cerebral cortex.

It is found in the cytoplasm. The protein resides in the cytoskeleton. Functionally, probable regulator of cytoskeletal architecture that plays an important role in development. May regulate cellular and cytoskeletal architecture by modulating the spatial distribution of myosin II. The protein is Protein Shroom4 (SHROOM4) of Homo sapiens (Human).